A 497-amino-acid polypeptide reads, in one-letter code: MEGSGEQPGPQPQHPGDHRIRDGDFVVLKREDVFKAVQVQRRKKVTFEKQWFYLDNVIGHSYGTAFEVTSGGSLQPKKKREEPTAETKEAGTDNRNIVDDGKSQKLTQDDIKALKDKGIKGEEIVQQLIENSTTFRDKTEFAQDKYIKKKKKKYEAIITVVKPSTRILSIMYYAREPGKINHMRYDTLAQMLTLGNIRAGNKMIVMETCAGLVLGAMMERMGGFGSIIQLYPGGGPVRAATACFGFPKSFLSGLYEFPLNKVDSLLHGTFSAKMLSSEPKDSALVEESNGTLEEKQASEQENEDSMAEAPESNHPEDQETMETISQDPEHKGPKERGSKKDYIQEKQRRQEEQRKRHLEAAALLSERNADGLIVASRFHPTPLLLSLLDFVAPSRPFVVYCQYKEPLLECYTKLRERGGVINLRLSETWLRNYQVLPDRSHPKLLMSGGGGYLLSGFTVAMDNLKADTSLKSNASTLESHETEEPAAKKRKCPESDS.

Disordered stretches follow at residues 1–20 (MEGS…DHRI) and 69–100 (TSGG…IVDD). The segment covering 79-100 (KREEPTAETKEAGTDNRNIVDD) has biased composition (basic and acidic residues). 94 to 104 (NRNIVDDGKSQ) provides a ligand contact to substrate. Residue Thr-107 is modified to Phosphothreonine. Substrate-binding positions include 145 to 154 (KYIKKKKKKY) and 175 to 182 (REPGKINH). The disordered stretch occupies residues 276–354 (SSEPKDSALV…EKQRRQEEQR (79 aa)). Residues Ser-298 and Ser-305 each carry the phosphoserine modification. Positions 327 to 354 (DPEHKGPKERGSKKDYIQEKQRRQEEQR) are enriched in basic and acidic residues. Substrate contacts are provided by residues Arg-349, Arg-377, 415–423 (RERGGVINL), and 434–441 (QVLPDRSH). The segment at 472 to 497 (SNASTLESHETEEPAAKKRKCPESDS) is disordered. Residues 478 to 497 (ESHETEEPAAKKRKCPESDS) show a composition bias toward basic and acidic residues.

Belongs to the TRM6/GCD10 family. In terms of assembly, heterotetramer; composed of two copies of TRMT6 and two copies of TRMT61A. Expressed in brain, liver, testis and ovary.

It is found in the nucleus. Its function is as follows. Substrate-binding subunit of tRNA (adenine-N(1)-)-methyltransferase, which catalyzes the formation of N(1)-methyladenine at position 58 (m1A58) in initiator methionyl-tRNA. Together with the TRMT61A catalytic subunit, part of a mRNA N(1)-methyltransferase complex that mediates methylation of adenosine residues at the N(1) position of a small subset of mRNAs: N(1) methylation takes place in tRNA T-loop-like structures of mRNAs and is only present at low stoichiometries. The chain is tRNA (adenine(58)-N(1))-methyltransferase non-catalytic subunit TRM6 (TRMT6) from Homo sapiens (Human).